A 130-amino-acid polypeptide reads, in one-letter code: Methylglyoxal synthase (130 aa).

One can recognise an MGS-like domain in the interval methionine 1–cysteine 130. Substrate contacts are provided by residues histidine 11, lysine 15, threonine 37–threonine 40, and serine 57–glycine 58. The active-site Proton donor/acceptor is aspartate 63. Histidine 90 contributes to the substrate binding site.

Belongs to the methylglyoxal synthase family.

The catalysed reaction is dihydroxyacetone phosphate = methylglyoxal + phosphate. Functionally, catalyzes the formation of methylglyoxal from dihydroxyacetone phosphate. The sequence is that of Methylglyoxal synthase from Burkholderia cenocepacia (strain HI2424).